Here is a 399-residue protein sequence, read N- to C-terminus: Acetate kinase (399 aa).

Asn-8 serves as a coordination point for Mg(2+). ATP is bound at residue Lys-15. Position 89 (Arg-89) interacts with substrate. Asp-146 (proton donor/acceptor) is an active-site residue. ATP is bound by residues 206–210, 283–285, and 331–335; these read HVGNG, DMR, and GMGEN. Position 383 (Glu-383) interacts with Mg(2+).

Belongs to the acetokinase family. Homodimer. Mg(2+) serves as cofactor. Requires Mn(2+) as cofactor.

It localises to the cytoplasm. The catalysed reaction is acetate + ATP = acetyl phosphate + ADP. It functions in the pathway metabolic intermediate biosynthesis; acetyl-CoA biosynthesis; acetyl-CoA from acetate: step 1/2. In terms of biological role, catalyzes the formation of acetyl phosphate from acetate and ATP. Can also catalyze the reverse reaction. In Streptococcus equi subsp. equi (strain 4047), this protein is Acetate kinase.